The primary structure comprises 2540 residues: Probable JmjC domain-containing histone demethylation protein 2C (2540 aa).

The segment covering 278-309 has biased composition (polar residues); it reads TRAQANSPRPAMNSQAAVPKQNTHQQQQQRSI. Residues 278–478 form a disordered region; the sequence is TRAQANSPRP…TVSDHNSNDL (201 aa). 2 positions are modified to phosphoserine: Ser-317 and Ser-320. A compositionally biased stretch (basic and acidic residues) spans 323–342; sequence DEEKMKEEKYDYISRGENPK. The span at 343-353 shows a compositional bias: basic residues; the sequence is GKNKHLMNKRR. Over residues 354–371 the composition is skewed to basic and acidic residues; it reads KPEEDEKKLNMKRLRTDN. Phosphoserine is present on residues Ser-373 and Ser-376. Over residues 373–382 the composition is skewed to low complexity; that stretch reads SDFSESSDSE. 3 stretches are compositionally biased toward basic and acidic residues: residues 383 to 403, 410 to 427, and 438 to 452; these read NSNK…ELKN, NGEE…EETL, and QEDK…RKSV. The segment covering 464–478 has biased composition (polar residues); sequence SSEQSTVSDHNSNDL. 2 positions are modified to phosphoserine: Ser-475 and Ser-501. Thr-505 carries the post-translational modification Phosphothreonine. Phosphoserine is present on residues Ser-601, Ser-617, Ser-638, Ser-639, Ser-641, Ser-652, and Ser-943. The tract at residues 631-656 is disordered; that stretch reads VDTHKIKSSPSPEVVKPKITHSPDSV. Disordered stretches follow at residues 1242–1263 and 1614–1692; these read GKVQ…SQAN and NRRK…NSNT. Basic residues predominate over residues 1643-1652; that stretch reads KRQPKPTYKK. Positions 1653–1669 are enriched in basic and acidic residues; sequence KQNDLQKRKGEIEEDLK. The C6-type zinc-finger motif lies at 1846-1871; the sequence is CDACEATLFNIHWVCQKCGFVVCLDC. Residues 1971–1991 are compositionally biased toward polar residues; that stretch reads PESQQQNTPPKSEKNGGSSPE. The interval 1971 to 2064 is disordered; the sequence is PESQQQNTPP…LVSQNNEQGS (94 aa). Position 1989 is a phosphoserine (Ser-1989). Basic and acidic residues predominate over residues 2016-2043; sequence AEQKAREEKKENKELTLENQIKEEREQD. Residues 2045 to 2064 are compositionally biased toward polar residues; it reads SESPNGRTSPLVSQNNEQGS. The LXXLL motif signature appears at 2066 to 2070; sequence LRDLL. Glycyl lysine isopeptide (Lys-Gly) (interchain with G-Cter in SUMO2) cross-links involve residues Lys-2132 and Lys-2136. Residues 2274–2498 enclose the JmjC domain; sequence MPARYEDLLK…ESFHLTQELR (225 aa). Fe cation contacts are provided by His-2336, Glu-2338, and His-2466.

This sequence belongs to the JHDM2 histone demethylase family. As to quaternary structure, interacts specifically with the ligand-binding domain of the thyroid receptor (TR). Requires the presence of thyroid hormone for its interaction. Fe(2+) serves as cofactor.

Its subcellular location is the nucleus. Probable histone demethylase that specifically demethylates 'Lys-9' of histone H3, thereby playing a central role in histone code. Demethylation of Lys residue generates formaldehyde and succinate. May be involved in hormone-dependent transcriptional activation, by participating in recruitment to androgen-receptor target genes. The polypeptide is Probable JmjC domain-containing histone demethylation protein 2C (JMJD1C) (Homo sapiens (Human)).